Here is a 134-residue protein sequence, read N- to C-terminus: ATP synthase epsilon chain, chloroplastic (134 aa).

This sequence belongs to the ATPase epsilon chain family. As to quaternary structure, F-type ATPases have 2 components, CF(1) - the catalytic core - and CF(0) - the membrane proton channel. CF(1) has five subunits: alpha(3), beta(3), gamma(1), delta(1), epsilon(1). CF(0) has three main subunits: a, b and c.

It localises to the plastid. The protein resides in the chloroplast thylakoid membrane. Functionally, produces ATP from ADP in the presence of a proton gradient across the membrane. The chain is ATP synthase epsilon chain, chloroplastic from Chlorella vulgaris (Green alga).